We begin with the raw amino-acid sequence, 953 residues long: Translation initiation factor IF-2 (953 aa).

The segment at 55–340 is disordered; the sequence is GVTTEAPAAS…KSKRQKRNEY (286 aa). Residues 81–93 show a composition bias toward low complexity; the sequence is KPAATPQQAAKPA. Over residues 110-119 the composition is skewed to pro residues; the sequence is PKPAAKPVPK. Low complexity-rich tracts occupy residues 123–133 and 143–160; these read SAAKAESSAPK and KPAAQSSTTATPGSMPRP. A compositionally biased stretch (gly residues) spans 202–219; the sequence is PGGGPRPGGNRPQGGQGG. A compositionally biased stretch (low complexity) spans 233–248; the sequence is QPRPQGGSRSQQSGGQ. Gly residues predominate over residues 280-323; sequence NGRGGAGGQGGRPGFGGGRPGGGGSAGGRGGRRGGTAGAFGRPG. Positions 327–336 are enriched in basic residues; it reads RKGRKSKRQK. The tr-type G domain occupies 449–621; sequence KRPPVVTVMG…VLLTADASLD (173 aa). The interval 458–465 is G1; it reads GHVDHGKT. 458–465 is a GTP binding site; it reads GHVDHGKT. The G2 stretch occupies residues 483–487; that stretch reads GITQG. The segment at 508–511 is G3; that stretch reads DTPG. GTP contacts are provided by residues 508–512 and 562–565; these read DTPGH and NKID. The interval 562-565 is G4; that stretch reads NKID. The interval 598 to 600 is G5; sequence SAK.

It belongs to the TRAFAC class translation factor GTPase superfamily. Classic translation factor GTPase family. IF-2 subfamily.

The protein localises to the cytoplasm. In terms of biological role, one of the essential components for the initiation of protein synthesis. Protects formylmethionyl-tRNA from spontaneous hydrolysis and promotes its binding to the 30S ribosomal subunits. Also involved in the hydrolysis of GTP during the formation of the 70S ribosomal complex. The protein is Translation initiation factor IF-2 of Corynebacterium diphtheriae (strain ATCC 700971 / NCTC 13129 / Biotype gravis).